Here is a 550-residue protein sequence, read N- to C-terminus: CTP synthase (550 aa).

The segment at 1–277 (MNGSADAGPR…GRAVERALGL (277 aa)) is amidoligase domain. Serine 23 provides a ligand contact to CTP. Position 23 (serine 23) interacts with UTP. 24–29 (SLGKGI) is an ATP binding site. Residue tyrosine 64 coordinates L-glutamine. Aspartate 81 contributes to the ATP binding site. Mg(2+) is bound by residues aspartate 81 and glutamate 151. CTP is bound by residues 158-160 (DIE), 198-203 (KTKPTQ), and lysine 234. Residues 198–203 (KTKPTQ) and lysine 234 each bind UTP. In terms of domain architecture, Glutamine amidotransferase type-1 spans 302-549 (KIAIAGKYVK…VEAALAYQER (248 aa)). Glycine 364 contacts L-glutamine. The active-site Nucleophile; for glutamine hydrolysis is cysteine 391. L-glutamine contacts are provided by residues 392–395 (LGLQ), glutamate 415, and arginine 472. Active-site residues include histidine 522 and glutamate 524.

Belongs to the CTP synthase family. As to quaternary structure, homotetramer.

It catalyses the reaction UTP + L-glutamine + ATP + H2O = CTP + L-glutamate + ADP + phosphate + 2 H(+). The catalysed reaction is L-glutamine + H2O = L-glutamate + NH4(+). The enzyme catalyses UTP + NH4(+) + ATP = CTP + ADP + phosphate + 2 H(+). The protein operates within pyrimidine metabolism; CTP biosynthesis via de novo pathway; CTP from UDP: step 2/2. Its activity is regulated as follows. Allosterically activated by GTP, when glutamine is the substrate; GTP has no effect on the reaction when ammonia is the substrate. The allosteric effector GTP functions by stabilizing the protein conformation that binds the tetrahedral intermediate(s) formed during glutamine hydrolysis. Inhibited by the product CTP, via allosteric rather than competitive inhibition. Functionally, catalyzes the ATP-dependent amination of UTP to CTP with either L-glutamine or ammonia as the source of nitrogen. Regulates intracellular CTP levels through interactions with the four ribonucleotide triphosphates. This chain is CTP synthase, found in Thermus thermophilus (strain ATCC BAA-163 / DSM 7039 / HB27).